The primary structure comprises 288 residues: Small ribosomal subunit protein uS2 (288 aa).

Residues 228–288 (RAGLSSDKDA…PAAEAPSTEA (61 aa)) form a disordered region. The span at 257–288 (QAAPAAEAAPAAEAQAAPAAEAPAAEAPSTEA) shows a compositional bias: low complexity.

This sequence belongs to the universal ribosomal protein uS2 family.

This chain is Small ribosomal subunit protein uS2, found in Rhodococcus opacus (strain B4).